A 297-amino-acid chain; its full sequence is Undecaprenyl-diphosphatase (297 aa).

Transmembrane regions (helical) follow at residues 58–78 (PGVA…LSYF), 103–123 (AQMG…GLLI), 138–158 (LAAI…AEQL), 168–188 (LRLA…IPGV), 208–228 (AARF…LVEL), 243–263 (VLAI…AWLL), and 274–294 (FVVY…TGTL).

This sequence belongs to the UppP family.

The protein resides in the cell inner membrane. It catalyses the reaction di-trans,octa-cis-undecaprenyl diphosphate + H2O = di-trans,octa-cis-undecaprenyl phosphate + phosphate + H(+). Functionally, catalyzes the dephosphorylation of undecaprenyl diphosphate (UPP). Confers resistance to bacitracin. The protein is Undecaprenyl-diphosphatase of Synechococcus sp. (strain ATCC 27144 / PCC 6301 / SAUG 1402/1) (Anacystis nidulans).